The following is a 517-amino-acid chain: DNA-binding protein Ikaros (517 aa).

The interval 1-71 is disordered; the sequence is MDVDEGQDMS…QSDEENGRAC (71 aa). The residue at position 13 (S13) is a Phosphoserine. Phosphothreonine is present on T23. The span at 37-47 shows a compositional bias: polar residues; that stretch reads LSTTSGAQQNS. K58 is covalently cross-linked (Glycyl lysine isopeptide (Lys-Gly) (interchain with G-Cter in SUMO)). S63 and S101 each carry phosphoserine. The C2H2-type 1 zinc finger occupies 117–139; the sequence is LKCDICGIVCIGPNVLMVHKRSH. The residue at position 140 (T140) is a Phosphothreonine. The segment at 144–166 adopts a C2H2-type 2 zinc-finger fold; it reads FQCNQCGASFTQKGNLLRHIKLH. Residues 153–162 are required for both high-affinity DNA binding and pericentromeric heterochromatin localization; it reads FTQKGNLLRH. At S167 the chain carries Phosphoserine. The C2H2-type 3 zinc finger occupies 172-194; it reads FKCHLCNYACRRRDALTGHLRTH. Positions 179–194 are required for both high-affinity DNA binding and pericentromeric heterochromatin localization; the sequence is YACRRRDALTGHLRTH. Residue S195 is modified to Phosphoserine. The C2H2-type 4 zinc-finger motif lies at 200–223; the sequence is HKCGYCGRSYKQRSSLEEHKERCH. Residue K239 forms a Glycyl lysine isopeptide (Lys-Gly) (interchain with G-Cter in SUMO) linkage. Phosphoserine is present on residues S259, S287, S293, S357, S360, S384, S386, S388, and S392. The interval 376–400 is disordered; it reads SVSSEREASPSNSCQDSTDTESNAE. Residue T393 is modified to Phosphothreonine. Phosphoserine occurs at positions 397 and 440. 2 consecutive C2H2-type zinc fingers follow at residues 457 to 479 and 488 to 512; these read YKCE…MGCH and FECN…RGEH. Residues 463-466 are required for binding PP1CC; sequence RVLF.

Belongs to the Ikaros C2H2-type zinc-finger protein family. As to quaternary structure, heterodimer with other IKAROS family members. Interacts with IKZF4 and IKZF5. Component of the chromatin-remodeling NuRD repressor complex which includes at least HDAC1, HDAC2, RBBP4, RBBP7, IKZF1, MTA2, MBD2, MBD3, MTA1L1, CHD3 and CHD4. Interacts directly with the CHD4 component of the NuRD complex. Interacts directly with SMARCA4; the interaction associates IKFZ1 with the BAF complex. Interacts with SUMO1; the interaction sumoylates IKAROS, promoted by PIAS2 and PIAS3. Interacts with PIAS2 (isoform alpha); the interaction promotes sumoylation and reduces transcription repression. Interacts, to a lesser extent, with PIAS3. Interacts with PPP1CC; the interaction targets PPP1CC to pericentromeric heterochromatin, dephosphorylates IKAROS, stabilizes it and prevents it from degradation. Interacts with IKZF3. In terms of processing, phosphorylation at Ser-357 and Ser-360 downstream of SYK induces nuclear translocation. Phosphorylation controls cell-cycle progression from late G(1) stage to S stage. Hyperphosphorylated during G2/M phase. Dephosphorylated state during late G(1) phase. Phosphorylation on Thr-140 is required for DNA and pericentromeric location during mitosis. CK2 is the main kinase, in vitro. GSK3 and CDK may also contribute to phosphorylation of the C-terminal serine and threonine residues. Phosphorylation on these C-terminal residues reduces the DNA-binding ability. Phosphorylation/dephosphorylation events on Ser-13 and Ser-293 regulate TDT expression during thymocyte differentiation. Dephosphorylation by protein phosphatase 1 regulates stability and pericentromeric heterochromatin location. Phosphorylated in both lymphoid and non-lymphoid tissues. Sumoylated. Simultaneous sumoylation on the 2 sites results in a loss of both HDAC-dependent and HDAC-independent repression. Has no effect on pericentromeric heterochromatin location. Desumoylated by SENP1. Post-translationally, polyubiquitinated. In terms of tissue distribution, strongly expressed in T-cells and their progenitors,in B-cells, and in all early embryonic retinal progenitor cells (RPCs). Isoforms V and VI are the predominant isoforms in lymphocytes.

The protein resides in the nucleus. The protein localises to the cytoplasm. Transcription regulator of hematopoietic cell differentiation. Binds gamma-satellite DNA. Binds with higher affinity to gamma satellite A. Plays a role in the development of lymphocytes, B- and T-cells. Binds and activates the enhancer (delta-A element) of the CD3-delta gene. Repressor of the TDT (terminal deoxynucleotidyltransferase) gene during thymocyte differentiation. Regulates transcription through association with both HDAC-dependent and HDAC-independent complexes. Targets the 2 chromatin-remodeling complexes, NuRD and BAF (SWI/SNF), in a single complex (PYR complex), to the beta-globin locus in adult erythrocytes. Increases normal apoptosis in adult erythroid cells. Confers early temporal competence to retinal progenitor cells (RPCs). Function is isoform-specific and is modulated by dominant-negative inactive isoforms. This chain is DNA-binding protein Ikaros (Ikzf1), found in Mus musculus (Mouse).